Consider the following 339-residue polypeptide: Heat-inducible transcription repressor HrcA (339 aa).

This sequence belongs to the HrcA family.

In terms of biological role, negative regulator of class I heat shock genes (grpE-dnaK-dnaJ and groELS operons). Prevents heat-shock induction of these operons. This chain is Heat-inducible transcription repressor HrcA, found in Frankia casuarinae (strain DSM 45818 / CECT 9043 / HFP020203 / CcI3).